Consider the following 27-residue polypeptide: Conotoxin (27 aa).

3 disulfides stabilise this stretch: cysteine 2–cysteine 16, cysteine 6–cysteine 18, and cysteine 12–cysteine 23. Residue asparagine 27 is modified to Asparagine amide.

Expressed by the venom duct.

Its subcellular location is the secreted. Its function is as follows. Probable neurotoxin that inhibits ion channels. The polypeptide is Conotoxin (Conus amadis (Amadis cone)).